The sequence spans 198 residues: Recombination protein RecR (198 aa).

The segment at 57-72 (CSVCGHITENDPCYIC) adopts a C4-type zinc-finger fold. Residues 80-175 (SVICVVEDDK…KVTRLAQGLS (96 aa)) enclose the Toprim domain.

The protein belongs to the RecR family.

Functionally, may play a role in DNA repair. It seems to be involved in an RecBC-independent recombinational process of DNA repair. It may act with RecF and RecO. This is Recombination protein RecR from Staphylococcus haemolyticus (strain JCSC1435).